Consider the following 130-residue polypeptide: L-ectoine synthase (130 aa).

It belongs to the ectoine synthase family.

The enzyme catalyses (2S)-4-acetamido-2-aminobutanoate = L-ectoine + H2O. Its pathway is amine and polyamine biosynthesis; ectoine biosynthesis; L-ectoine from L-aspartate 4-semialdehyde: step 3/3. In terms of biological role, catalyzes the circularization of gamma-N-acetyl-alpha,gamma-diaminobutyric acid (ADABA) to ectoine (1,4,5,6-tetrahydro-2-methyl-4-pyrimidine carboxylic acid), which is an excellent osmoprotectant. The protein is L-ectoine synthase of Mycolicibacterium gilvum (strain PYR-GCK) (Mycobacterium gilvum (strain PYR-GCK)).